Reading from the N-terminus, the 560-residue chain is DNA ligase B (560 aa).

Lys124 serves as the catalytic N6-AMP-lysine intermediate.

It belongs to the NAD-dependent DNA ligase family. LigB subfamily.

It carries out the reaction NAD(+) + (deoxyribonucleotide)n-3'-hydroxyl + 5'-phospho-(deoxyribonucleotide)m = (deoxyribonucleotide)n+m + AMP + beta-nicotinamide D-nucleotide.. Functionally, catalyzes the formation of phosphodiester linkages between 5'-phosphoryl and 3'-hydroxyl groups in double-stranded DNA using NAD as a coenzyme and as the energy source for the reaction. The sequence is that of DNA ligase B from Escherichia coli O139:H28 (strain E24377A / ETEC).